Reading from the N-terminus, the 241-residue chain is MAGHSKWANIKHKKAAADAKRGKVWTRLIKEITVAAKLGGGEFDSNPRLRLAMEKAMDANMPKDNIQRAIQRGVGGLEGANYEEIRYEGYGLAGAAIIVDCLTDNRTRTVAEVRHAFSKHGGNMGTEGSVAFMFTHCGQFLFAPGTPEDKLMDAALEAGADDVVTNDDESIEVTCPPNDFGAVKAALEAAGFKAEVADVVMKPQNEVSFVGDDAVKMQKLLDALENLDDVQEVFTNAVVEE.

The protein belongs to the TACO1 family.

The protein resides in the cytoplasm. In Cupriavidus metallidurans (strain ATCC 43123 / DSM 2839 / NBRC 102507 / CH34) (Ralstonia metallidurans), this protein is Probable transcriptional regulatory protein Rmet_0785.